Reading from the N-terminus, the 858-residue chain is Bifunctional uridylyltransferase/uridylyl-removing enzyme (858 aa).

Residues 1–324 (MSAHAAPSPE…PATSGITRVL (324 aa)) form a uridylyltransferase region. A uridylyl-removing region spans residues 325–681 (SADRFVEKQG…ARPSPIGDAL (357 aa)). Residues 443-565 (VDQHILMVLR…VGNERYLTAL (123 aa)) enclose the HD domain. 2 ACT domains span residues 682–763 (QVLV…PSKG) and 790–858 (ILSV…AIAV).

Belongs to the GlnD family. Mg(2+) serves as cofactor.

It catalyses the reaction [protein-PII]-L-tyrosine + UTP = [protein-PII]-uridylyl-L-tyrosine + diphosphate. It carries out the reaction [protein-PII]-uridylyl-L-tyrosine + H2O = [protein-PII]-L-tyrosine + UMP + H(+). Uridylyltransferase (UTase) activity is inhibited by glutamine, while glutamine activates uridylyl-removing (UR) activity. In terms of biological role, modifies, by uridylylation and deuridylylation, the PII regulatory proteins (GlnB and homologs), in response to the nitrogen status of the cell that GlnD senses through the glutamine level. Under low glutamine levels, catalyzes the conversion of the PII proteins and UTP to PII-UMP and PPi, while under higher glutamine levels, GlnD hydrolyzes PII-UMP to PII and UMP (deuridylylation). Thus, controls uridylylation state and activity of the PII proteins, and plays an important role in the regulation of nitrogen assimilation and metabolism. The polypeptide is Bifunctional uridylyltransferase/uridylyl-removing enzyme (Burkholderia orbicola (strain MC0-3)).